The chain runs to 1463 residues: Clustered mitochondria protein homolog (1463 aa).

The segment at 1-79 (MAKNKKQNGK…ETEQQQQQQE (79 aa)) is disordered. Over residues 10–22 (KAKTPPVVAAAAG) the composition is skewed to low complexity. One can recognise a Clu domain in the interval 374–616 (RAEDTFSSKL…RTFPPDVNFL (243 aa)). Disordered stretches follow at residues 684–753 (AQKT…SEDA), 942–988 (GDGQ…SVPS), and 1387–1463 (QKEA…RRKS). Over residues 692-702 (KQAAIEAAAPA) the composition is skewed to low complexity. Residues 703–731 (EGDKTPAKDAKDGKEAGKDANDGKEEGST) are compositionally biased toward basic and acidic residues. Basic residues predominate over residues 955-964 (GGKKQNKQSK). The segment covering 965 to 980 (RGGGGGGGKGAAGGGR) has biased composition (gly residues). Over residues 1438-1456 (AEAASHTAGGAAANTAAPA) the composition is skewed to low complexity.

This sequence belongs to the CLU family.

The protein resides in the cytoplasm. MRNA-binding protein involved in proper cytoplasmic distribution of mitochondria. This chain is Clustered mitochondria protein homolog, found in Anopheles gambiae (African malaria mosquito).